A 353-amino-acid polypeptide reads, in one-letter code: Fe(3+) ions import ATP-binding protein FbpC (353 aa).

Residues 9–239 enclose the ABC transporter domain; sequence VTFENVTKKF…PASAFIADFM (231 aa). 41-48 is a binding site for ATP; the sequence is GPSGCGKT.

It belongs to the ABC transporter superfamily. Fe(3+) ion importer (TC 3.A.1.10) family. In terms of assembly, the complex is composed of two ATP-binding proteins (FbpC), two transmembrane proteins (FbpB) and a solute-binding protein (FbpA).

Its subcellular location is the cell inner membrane. It catalyses the reaction Fe(3+)(out) + ATP + H2O = Fe(3+)(in) + ADP + phosphate + H(+). Part of the ABC transporter complex FbpABC involved in Fe(3+) ions import. Responsible for energy coupling to the transport system. This Brucella abortus (strain 2308) protein is Fe(3+) ions import ATP-binding protein FbpC.